Reading from the N-terminus, the 423-residue chain is Cytochrome c biogenesis protein Ccs1 (423 aa).

Helical transmembrane passes span 11–31 (LKFA…GSII), 70–90 (NFWF…CTFF), and 153–173 (IAPV…IFAS).

The protein belongs to the Ccs1/CcsB family. As to quaternary structure, may interact with CcsA.

The protein localises to the plastid. The protein resides in the chloroplast thylakoid membrane. Its function is as follows. Required during biogenesis of c-type cytochromes (cytochrome c6 and cytochrome f) at the step of heme attachment. This is Cytochrome c biogenesis protein Ccs1 from Heterosigma akashiwo (strain NIES-293 / 8280G21-1).